Reading from the N-terminus, the 1409-residue chain is DNA-directed RNA polymerase subunit beta' (1409 aa).

Zn(2+) is bound by residues Cys-70, Cys-72, Cys-85, and Cys-88. The Mg(2+) site is built by Asp-461, Asp-463, and Asp-465. 4 residues coordinate Zn(2+): Cys-820, Cys-894, Cys-901, and Cys-904.

Belongs to the RNA polymerase beta' chain family. As to quaternary structure, the RNAP catalytic core consists of 2 alpha, 1 beta, 1 beta' and 1 omega subunit. When a sigma factor is associated with the core the holoenzyme is formed, which can initiate transcription. It depends on Mg(2+) as a cofactor. Zn(2+) is required as a cofactor.

It catalyses the reaction RNA(n) + a ribonucleoside 5'-triphosphate = RNA(n+1) + diphosphate. Its function is as follows. DNA-dependent RNA polymerase catalyzes the transcription of DNA into RNA using the four ribonucleoside triphosphates as substrates. This chain is DNA-directed RNA polymerase subunit beta', found in Ralstonia nicotianae (strain ATCC BAA-1114 / GMI1000) (Ralstonia solanacearum).